Consider the following 690-residue polypeptide: BURP domain-containing protein 14 (690 aa).

Positions 1–26 (MAPPRHARLVAATIAVLLCHLPRSAA) are cleaved as a signal peptide. The disordered stretch occupies residues 134–163 (GSSWSKSSSDGDGAAAAAAPAGGGGGGGGG). Positions 135–153 (SSWSKSSSDGDGAAAAAAP) are enriched in low complexity. Residues 154 to 163 (AGGGGGGGGG) show a composition bias toward gly residues. A glycan (N-linked (GlcNAc...) asparagine) is linked at Asn178. Positions 201-211 (SNGGGGGGGGV) are enriched in gly residues. The interval 201–232 (SNGGGGGGGGVDSFRRYGKGSQGRNDSFTSYE) is disordered. Asn225, Asn317, Asn379, Asn432, Asn450, and Asn601 each carry an N-linked (GlcNAc...) asparagine glycan. In terms of domain architecture, BURP spans 477-689 (FFRERDLVAG…FQGDMTWTVA (213 aa)).

As to expression, expressed in panicles.

The polypeptide is BURP domain-containing protein 14 (BURP14) (Oryza sativa subsp. japonica (Rice)).